We begin with the raw amino-acid sequence, 400 residues long: Nicotinate phosphoribosyltransferase (400 aa).

Phosphohistidine; by autocatalysis is present on His220.

The protein belongs to the NAPRTase family. Transiently phosphorylated on a His residue during the reaction cycle. Phosphorylation strongly increases the affinity for substrates and increases the rate of nicotinate D-ribonucleotide production. Dephosphorylation regenerates the low-affinity form of the enzyme, leading to product release.

The catalysed reaction is nicotinate + 5-phospho-alpha-D-ribose 1-diphosphate + ATP + H2O = nicotinate beta-D-ribonucleotide + ADP + phosphate + diphosphate. It functions in the pathway cofactor biosynthesis; NAD(+) biosynthesis; nicotinate D-ribonucleotide from nicotinate: step 1/1. In terms of biological role, catalyzes the synthesis of beta-nicotinate D-ribonucleotide from nicotinate and 5-phospho-D-ribose 1-phosphate at the expense of ATP. This chain is Nicotinate phosphoribosyltransferase, found in Shigella sonnei (strain Ss046).